Reading from the N-terminus, the 558-residue chain is MGAAEPRMEVCPYCKKPFKRLKSHLPHCKMRGPSISADQNVSQSKPAALAQKEKSPTRDLTRAKEKELEVDRPKRAVKAETSRASWTAAASPLPEGILGSVRITKAEGENKDQNQFSFQALSQAKPEVTLQRVTTPWSPASDATSPKRELTQDVSESKGSPCPSETEAPSLVSSVEPFLANQDRKYSSTQPHANPATSVGLKLGTVDPQRQKLRVKLLDVPLSDRHSPKSGSHGVQRVTPSVLSREEGSQDGGHLLGVSAHPGNTKTQKSESLLLGLHTGLLGKAPVREHQELGLGMELSQSKGNTENRMSVTNVQEGAGLGQGGKDPITATKAKPHTALELRNVFMPESGNQSLTSPAVTSTPEENAQFCGQSHVPAITLSVGSVRDVLEPTSFYQPHTAQAGHCLMSYSAQYPVPKTFVGHVAAVTSGAPPRSVGLEWFPELYPAYVGLGVLPRRPPPWSLAAQVPPLPTLQGRSVSKVPWWGRSSADSRSLEPLTLTTSSLPLMRLLGAVHKGWVQCNTTIKKSGVGGLTMLFAGYFILCCNWSFKHLKLQHWRK.

Residues 1 to 527 (MGAAEPRMEV…VQCNTTIKKS (527 aa)) are Extracellular-facing. Disordered stretches follow at residues 29 to 88 (KMRG…SWTA), 130 to 205 (LQRV…KLGT), and 222 to 269 (LSDR…KTQK). The span at 36–45 (SADQNVSQSK) shows a compositional bias: polar residues. Residues 51–81 (QKEKSPTRDLTRAKEKELEVDRPKRAVKAET) are compositionally biased toward basic and acidic residues. Polar residues-rich tracts occupy residues 131 to 144 (QRVTTPWSPASDAT) and 187 to 197 (SSTQPHANPAT). A helical membrane pass occupies residues 528–548 (GVGGLTMLFAGYFILCCNWSF). Topologically, residues 549-558 (KHLKLQHWRK) are cytoplasmic.

It localises to the mitochondrion inner membrane. Its subcellular location is the mitochondrion matrix. The protein localises to the mitochondrion nucleoid. In terms of biological role, critical regulator of mitochondrial DNA (mtDNA) abundance. Binds dsDNA throughout the mitochondrial genome without sequence specificity and controls mtDNA copy number by promoting its replication. Also plays important roles in mitochondrial metabolism and cell proliferation. This Mus musculus (Mouse) protein is Mitochondrial nucleoid-associated protein 1.